The primary structure comprises 346 residues: Ion-translocating oxidoreductase complex subunit D (346 aa).

A run of 4 helical transmembrane segments spans residues 20–40 (IMIQ…TFFG), 42–62 (GIII…GVVL), 69–91 (LASR…SLPP), and 120–140 (PFNP…VQMT). FMN phosphoryl threonine is present on threonine 187. Transmembrane regions (helical) follow at residues 212–232 (ASAG…YLIW), 242–262 (LSLL…APVV), 264–284 (APPL…FIAT), 290–310 (AATV…VWLI), and 314–334 (GGYP…VPLI).

It belongs to the NqrB/RnfD family. As to quaternary structure, the complex is composed of six subunits: RnfA, RnfB, RnfC, RnfD, RnfE and RnfG. FMN serves as cofactor.

It is found in the cell inner membrane. In terms of biological role, part of a membrane-bound complex that couples electron transfer with translocation of ions across the membrane. In Sodalis glossinidius (strain morsitans), this protein is Ion-translocating oxidoreductase complex subunit D.